A 268-amino-acid chain; its full sequence is Hydroxyacylglutathione hydrolase (268 aa).

Zn(2+)-binding residues include histidine 56, histidine 58, aspartate 60, histidine 61, histidine 112, aspartate 137, and histidine 176. 176–178 (HEY) serves as a coordination point for substrate.

Belongs to the metallo-beta-lactamase superfamily. Glyoxalase II family. As to quaternary structure, monomer. It depends on Zn(2+) as a cofactor.

It catalyses the reaction an S-(2-hydroxyacyl)glutathione + H2O = a 2-hydroxy carboxylate + glutathione + H(+). The protein operates within secondary metabolite metabolism; methylglyoxal degradation; (R)-lactate from methylglyoxal: step 2/2. Thiolesterase that catalyzes the hydrolysis of S-D-lactoyl-glutathione to form glutathione and D-lactic acid. The polypeptide is Hydroxyacylglutathione hydrolase (hagh) (Dictyostelium discoideum (Social amoeba)).